The chain runs to 231 residues: Somatolactin-1 (231 aa).

The first 24 residues, 1-24 (MRMIRAIKQGQWAVLLWPYLLTAS), serve as a signal peptide directing secretion. 3 cysteine pairs are disulfide-bonded: cysteine 29–cysteine 39, cysteine 89–cysteine 205, and cysteine 222–cysteine 230. A glycan (N-linked (GlcNAc...) asparagine) is linked at asparagine 145.

Belongs to the somatotropin/prolactin family. In terms of tissue distribution, pituitary gland.

It is found in the secreted. The sequence is that of Somatolactin-1 from Sparus aurata (Gilthead sea bream).